Here is a 1116-residue protein sequence, read N- to C-terminus: Phosphatidylinositol 4-kinase beta 2 (1116 aa).

Residues 1–143 (MQMAQFLSLV…SRIQEKCQIA (143 aa)) enclose the PIK helical domain. 8 tandem repeats follow at residues 210-229 (ADDN…RDAL), 242-261 (CEKD…EDDE), 264-283 (SNSE…EEEE), 286-304 (NNSE…DEEE), 307-326 (SSSD…DEEE), 329-348 (ANSE…EDEE), 351-370 (ANTE…EDDK), and 378-396 (EEKD…DEKR). The 11 X 20 AA approximate repeats (PPC) stretch occupies residues 210 to 507 (ADDNKIFKRL…FRDRDRSVED (298 aa)). Basic and acidic residues predominate over residues 394 to 404 (EKRNGNERNET). The tract at residues 394 to 417 (EKRNGNERNETDETVYTDETSGED) is disordered. Over residues 405–415 (DETVYTDETSG) the composition is skewed to acidic residues. Repeat 9 spans residues 418 to 436 (NGREGFFKKLFKEKFEDKP). Ser-447 and Ser-452 each carry phosphoserine. Repeat copies occupy residues 452 to 470 (SSEF…EDVK) and 488 to 507 (PGTE…SVED). Disordered regions lie at residues 515–540 (KYKE…LPNN) and 794–813 (GEAP…SDAQ). A PI3K/PI4K catalytic domain is found at 830 to 1101 (EFWEGKRLRI…LISSSLDAWR (272 aa)). The interval 836-842 (RLRIRKD) is G-loop. Residues 964–972 (QIKDRHNGN) form a catalytic loop region. The segment at 983–1007 (HIDFGFMLSNSPGGVNFESAPFKLT) is activation loop.

Belongs to the PI3/PI4-kinase family. Type III PI4K subfamily.

It is found in the cell membrane. It localises to the golgi apparatus. The protein resides in the trans-Golgi network. The protein localises to the cytoplasmic vesicle membrane. The enzyme catalyses a 1,2-diacyl-sn-glycero-3-phospho-(1D-myo-inositol) + ATP = a 1,2-diacyl-sn-glycero-3-phospho-(1D-myo-inositol 4-phosphate) + ADP + H(+). In terms of biological role, acts on phosphatidylinositol (PtdIns) in the first committed step in the production of the second messenger inositol-1,4,5-trisphosphate. Necessary for proper organization of the trans-Golgi network (TGN) and post-Golgi secretion in root hairs. Together with PI4KB1, required during polarized root hair expansion and pollen tube elongation. Functions redundantly with PI4KB1 upstream of the cold response phosphoinositide-dependent phospholipase C (PI-PLC) pathway. This chain is Phosphatidylinositol 4-kinase beta 2 (PI4KB2), found in Arabidopsis thaliana (Mouse-ear cress).